The sequence spans 551 residues: Synapse-associated protein of 47 kDa (551 aa).

2 disordered regions span residues 20-72 (AGDE…AGKR) and 117-198 (AMPA…GQGK). 3 stretches are compositionally biased toward low complexity: residues 26–59 (PAPT…AAAA), 117–128 (AMPAMPSIPSIP), and 137–146 (DGAEGAEGAV). A phosphoserine mark is found at S178 and S182. A compositionally biased stretch (gly residues) spans 182–197 (SGGGTPTGDEGQIGQG). T186 is modified (phosphothreonine). A BSD domain is found at 295-347 (VDFEFSYDTAYPTAIAIMAEDKALETMRFELVPKIITEENFWRNYFYRVSLII). Residues 360-391 (VGQASSGEDANEVATKEKKSKTAEPAKGDSSV) form a disordered region. Positions 373–386 (ATKEKKSKTAEPAK) are enriched in basic and acidic residues. S433 is subject to Phosphoserine. The segment at 487 to 551 (KDYEVVDEGG…DLIEDTDDLK (65 aa)) is disordered. A compositionally biased stretch (acidic residues) spans 514-523 (DDTEADEDEP). Positions 524-535 (TISNLRTRSTNN) are enriched in polar residues. Phosphothreonine is present on T530. Residues 536-551 (DWEEYADLIEDTDDLK) show a composition bias toward acidic residues.

In terms of tissue distribution, expressed specifically in neurons and transported to synaptic terminals.

This is Synapse-associated protein of 47 kDa (Sap47) from Drosophila melanogaster (Fruit fly).